The chain runs to 559 residues: Paxillin (559 aa).

The short motif at Asp3–Thr15 is the LD motif 1 element. Residues His17–Gly139 are disordered. Position 31 is a phosphotyrosine (Tyr31). Residues Val45–Ser54 show a composition bias toward pro residues. Positions Gln79–Ser98 are enriched in low complexity. Tyr118 carries the post-translational modification Phosphotyrosine; by FAK1. Residues Pro121 to Ser137 show a composition bias toward polar residues. An LD motif 2 motif is present at residues Glu144–Gln156. 2 disordered regions span residues Asn158 to Asp213 and Leu225 to Ser262. Positions Ser217–Val229 match the LD motif 3 motif. Residues Thr237–Ser262 are compositionally biased toward polar residues. Residues Ala263–Gln282 are required for binding to PARVA and ILK. 2 consecutive short sequence motifs (LD motif) follow at residues Glu266–Phe277 and Gln301–Leu313. The disordered stretch occupies residues Ala281–Gln301. 4 LIM zinc-binding domains span residues Cys326–Asp376, Cys385–Asp435, Cys444–His494, and Cys503–Cys553.

As to quaternary structure, interacts (via LD motif 4) with PARVA/PARVIN and ILK. In terms of processing, phosphorylated on tyrosine residues during integrin-mediated cell adhesion, embryonic development, fibroblast transformation and following stimulation of cells by mitogens.

The protein localises to the cytoplasm. It localises to the cytoskeleton. Its subcellular location is the cell junction. It is found in the focal adhesion. The protein resides in the cell cortex. Its function is as follows. Cytoskeletal protein involved in actin-membrane attachment at sites of cell adhesion to the extracellular matrix (focal adhesion). Binds in vitro to vinculin as well as to the SH3 domain of c-SRC and, when tyrosine phosphorylated, to the SH2 domain of v-CRK. This chain is Paxillin (PXN), found in Gallus gallus (Chicken).